A 247-amino-acid polypeptide reads, in one-letter code: PF03932 family protein CutC (247 aa).

This sequence belongs to the CutC family.

The protein localises to the cytoplasm. This is PF03932 family protein CutC from Aliivibrio fischeri (strain MJ11) (Vibrio fischeri).